Here is a 379-residue protein sequence, read N- to C-terminus: Actin, cytoplasmic (379 aa).

Belongs to the actin family.

The protein resides in the cytoplasm. The protein localises to the cytoskeleton. It catalyses the reaction ATP + H2O = ADP + phosphate + H(+). Its function is as follows. Actins are highly conserved proteins that are involved in various types of cell motility and are ubiquitously expressed in all eukaryotic cells. The protein is Actin, cytoplasmic of Euplotes crassus.